A 430-amino-acid chain; its full sequence is Adenylosuccinate synthetase (430 aa).

GTP-binding positions include 12–18 and 40–42; these read GDEGKGK and GHT. Asp-13 serves as the catalytic Proton acceptor. Asp-13 and Gly-40 together coordinate Mg(2+). Residues 13–16, 38–41, Thr-130, Arg-144, Gln-224, Thr-239, and Arg-303 each bind IMP; these read DEGK and NAGH. His-41 acts as the Proton donor in catalysis. Residue 299–305 coordinates substrate; it reads TNTGRAR. GTP-binding positions include Arg-305, 331–333, and 413–415; these read KLD and STS.

The protein belongs to the adenylosuccinate synthetase family. As to quaternary structure, homodimer. Mg(2+) is required as a cofactor.

It localises to the cytoplasm. The catalysed reaction is IMP + L-aspartate + GTP = N(6)-(1,2-dicarboxyethyl)-AMP + GDP + phosphate + 2 H(+). It functions in the pathway purine metabolism; AMP biosynthesis via de novo pathway; AMP from IMP: step 1/2. In terms of biological role, plays an important role in the de novo pathway of purine nucleotide biosynthesis. Catalyzes the first committed step in the biosynthesis of AMP from IMP. The protein is Adenylosuccinate synthetase of Hyphomonas neptunium (strain ATCC 15444).